Consider the following 285-residue polypeptide: Dermonecrotic toxin LlSicTox-alphaIII1ii (285 aa).

Residue His-12 is part of the active site. Residues Glu-32 and Asp-34 each coordinate Mg(2+). The active-site Nucleophile is the His-47. A disulfide bridge connects residues Cys-51 and Cys-57. Asp-91 contributes to the Mg(2+) binding site.

The protein belongs to the arthropod phospholipase D family. Class I subfamily. It depends on Mg(2+) as a cofactor. As to expression, expressed by the venom gland.

The protein localises to the secreted. It carries out the reaction an N-(acyl)-sphingosylphosphocholine = an N-(acyl)-sphingosyl-1,3-cyclic phosphate + choline. The catalysed reaction is an N-(acyl)-sphingosylphosphoethanolamine = an N-(acyl)-sphingosyl-1,3-cyclic phosphate + ethanolamine. It catalyses the reaction a 1-acyl-sn-glycero-3-phosphocholine = a 1-acyl-sn-glycero-2,3-cyclic phosphate + choline. The enzyme catalyses a 1-acyl-sn-glycero-3-phosphoethanolamine = a 1-acyl-sn-glycero-2,3-cyclic phosphate + ethanolamine. Dermonecrotic toxins cleave the phosphodiester linkage between the phosphate and headgroup of certain phospholipids (sphingolipid and lysolipid substrates), forming an alcohol (often choline) and a cyclic phosphate. This toxin acts on sphingomyelin (SM) with high activity (56.8 U/mg). It may also act on ceramide phosphoethanolamine (CPE), lysophosphatidylcholine (LPC) and lysophosphatidylethanolamine (LPE), but not on lysophosphatidylserine (LPS), and lysophosphatidylglycerol (LPG). It acts by transphosphatidylation, releasing exclusively cyclic phosphate products as second products. Induces dermonecrosis, hemolysis, increased vascular permeability, edema, inflammatory response, and platelet aggregation. Is lethal to mice. This is Dermonecrotic toxin LlSicTox-alphaIII1ii from Loxosceles laeta (South American recluse spider).